The primary structure comprises 823 residues: MNDFKLPIYKYKDELIKVLKNHNVLIVESPTGSGKTTQLPRIIYEAGFAKLGKIGVTQPRRIATVSIAEYIAKHIGVNVGEEVGYKIRFEEITSPKTKIKLMTDGVLLQELKKDTLLYEYDVIIIDEAHERSLNIDFILGLIKDISRKRDDFKIIVSSATINTKIFSKYFNNAPVVSIETITYPVQIIYNPPLLNTSKGMILKIKEIVLNVIKEKKAGDILIFLSGEKEIKETIKELQELNSKKNLIIFPLYGRMPKEAQEQIFMTTPKNKRKIIVSTNIAETSITIENIKIVIDSGKVKTNKFQTKTHTYSLQEVPISKSSATQRAGRAGRLSKGTCYRLYKREDYQLREDYQKEEIYRTDLSEVVLRMADIGIRDFTHFDFISKPSTHSIQTASKILKSLDAINNKNELTEIGKYMILFPLIPAHSRALVEAMINYPQAIYQTTIGLSFLSTSGIFLLPQNEEMEARQAHLKYKNPMGDLIGFVNIFEDFKKALNKEAFTKENYLDLQGLEEIANVQMQLENIISKLNIPIIQKGVFDNEGYLKSIMRGMRDYICFKTSKKKYKTIKAQNVIIHPGSLISTDSVKYFVAGEIIETTKMYARSIGVLKKEWIDDIILNEEFKHNDISSKENQITNTGQTKIINEIKIGKKIFKAEYKNNIYVIKINLETLKEIIFKNELNNQNNEDLKKIKIQLMHKNITVFNNKKFLETIEIVKNMGKDWHCIKKYETKNVNIDEPEKMKNLLECTMQFISFPPKKNALFLSLETDYSGNFRLKPKQNFIMAIEESIESIKSLIENKEYIQKLHFIKKLINKVYKKLNYFF.

The Helicase ATP-binding domain maps to 16-179; sequence IKVLKNHNVL…FNNAPVVSIE (164 aa). 29 to 36 provides a ligand contact to ATP; it reads SPTGSGKT. Positions 126–129 match the DEAH box motif; sequence DEAH. The Helicase C-terminal domain occupies 203–374; that stretch reads KIKEIVLNVI…EVVLRMADIG (172 aa).

This sequence belongs to the DEAD box helicase family. DEAH subfamily.

It carries out the reaction ATP + H2O = ADP + phosphate + H(+). Functionally, has RNA-stimulated ATPase activity and RNA helicase activity. Involved in global regulation of gene expression. Could be involved in RNA processing and post-transcriptional gene regulation. Essential for both tick transmission and mouse infection. In Borreliella burgdorferi (strain ATCC 35210 / DSM 4680 / CIP 102532 / B31) (Borrelia burgdorferi), this protein is ATP-dependent RNA helicase HrpA.